A 353-amino-acid chain; its full sequence is UPF0283 membrane protein YcjF (353 aa).

The Periplasmic portion of the chain corresponds to Met1–Lys69. Residues Met70–Thr90 form a helical membrane-spanning segment. Over Met91–Trp99 the chain is Cytoplasmic. The chain crosses the membrane as a helical span at residues Val100–Val120. Residues Thr121–Ala212 lie on the Periplasmic side of the membrane. The chain crosses the membrane as a helical span at residues Glu213–Trp233. The Cytoplasmic portion of the chain corresponds to Arg234–Lys353.

The protein belongs to the UPF0283 family.

It is found in the cell inner membrane. This Escherichia coli O157:H7 protein is UPF0283 membrane protein YcjF (ycjF).